The primary structure comprises 548 residues: Membrane protein insertase YidC (548 aa).

Residues 6–26 traverse the membrane as a helical segment; the sequence is NLLVIALLFVSFMIWQAWEQD. Residues 28-54 form a disordered region; the sequence is NPQPQTQQTTQTTTTAAGSAADQGVPA. Residues 29–42 show a composition bias toward low complexity; that stretch reads PQPQTQQTTQTTTT. 4 helical membrane-spanning segments follow: residues 350–370, 424–444, 458–478, and 499–519; these read FLGN…GIMY, FPLI…MGSI, LSAQ…MFFI, and PVIF…YYIV.

The protein belongs to the OXA1/ALB3/YidC family. Type 1 subfamily. As to quaternary structure, interacts with the Sec translocase complex via SecD. Specifically interacts with transmembrane segments of nascent integral membrane proteins during membrane integration.

The protein localises to the cell inner membrane. Its function is as follows. Required for the insertion and/or proper folding and/or complex formation of integral membrane proteins into the membrane. Involved in integration of membrane proteins that insert both dependently and independently of the Sec translocase complex, as well as at least some lipoproteins. Aids folding of multispanning membrane proteins. The protein is Membrane protein insertase YidC of Citrobacter koseri (strain ATCC BAA-895 / CDC 4225-83 / SGSC4696).